A 186-amino-acid chain; its full sequence is Large ribosomal subunit protein uL5m (186 aa).

It belongs to the universal ribosomal protein uL5 family.

Its subcellular location is the mitochondrion. This Solanum tuberosum (Potato) protein is Large ribosomal subunit protein uL5m (RPL5).